Here is a 104-residue protein sequence, read N- to C-terminus: L-rhamnose mutarotase (104 aa).

Tyrosine 18 provides a ligand contact to substrate. Histidine 22 acts as the Proton donor in catalysis. Substrate contacts are provided by residues tyrosine 41 and 76-77 (WW).

This sequence belongs to the rhamnose mutarotase family. Homodimer.

The protein resides in the cytoplasm. It catalyses the reaction alpha-L-rhamnose = beta-L-rhamnose. Its pathway is carbohydrate metabolism; L-rhamnose metabolism. Functionally, involved in the anomeric conversion of L-rhamnose. In Shigella flexneri serotype 5b (strain 8401), this protein is L-rhamnose mutarotase.